A 614-amino-acid polypeptide reads, in one-letter code: Zinc metalloproteinase-disintegrin-like protein F1 (614 aa).

A signal peptide spans 1-20; sequence MLQVLLVTICLAVFPYQGSS. A propeptide spanning residues 21-192 is cleaved from the precursor; the sequence is IILESGNVND…IKASQFILTP (172 aa). The Cys-switch; controls maturation signature appears at 167-173; the sequence is PKKCGVT. A Pyrrolidone carboxylic acid (Glu) modification is found at Glu193. Positions 202-398 constitute a Peptidase M12B domain; the sequence is KYIKLAIVVD…HTPRCILNEP (197 aa). Asn221 carries N-linked (GlcNAc...) asparagine glycosylation. Intrachain disulfides connect Cys313–Cys393, Cys353–Cys377, and Cys355–Cys360. Position 338 (His338) interacts with Zn(2+). A Metal-binding motif is present at residues 338-349; it reads HELGHNLGINHD. The active-site Proton acceptor is Glu339. Zn(2+) contacts are provided by His342 and His348. The region spanning 406 to 492 is the Disintegrin domain; that stretch reads PAVCGNYVVE…ECPMDHIQKN (87 aa). Ca(2+)-binding residues include Val408, Asn411, Glu415, Glu418, and Asp421. 14 disulfide bridges follow: Cys409–Cys438, Cys420–Cys433, Cys422–Cys428, Cys432–Cys455, Cys446–Cys452, Cys451–Cys477, Cys464–Cys484, Cys471–Cys503, Cys496–Cys508, Cys515–Cys565, Cys530–Cys575, Cys543–Cys553, Cys560–Cys601, and Cys595–Cys607. The D/ECD-tripeptide motif lies at 470 to 472; the sequence is ECD. Asp472, Glu475, and Asp487 together coordinate Ca(2+). An N-linked (GlcNAc...) asparagine glycan is attached at Asn534.

Belongs to the venom metalloproteinase (M12B) family. P-III subfamily. P-IIIa sub-subfamily. As to quaternary structure, monomer. Requires Zn(2+) as cofactor. N-glycosylated. In terms of processing, the N-terminus is blocked. Expressed by the venom gland (at protein level). Expressed by the venom gland.

The protein resides in the secreted. Its activity is regulated as follows. The alpha-fibrinogenase activity is inhibited by EDTA, but not by pefabloc. Zinc metalloprotease that has fibrinogenolytic activity. Does not have hemorrhagic activity in rats. Cleaves insulin B chain at '38-Ala-|-Leu-39' and '40-Tyr-|-Leu-41' bonds. Hydrolyzes only partially and weakly isolated extracellular matrix (ECM) bovine fibronectin and basal membrane (BM) protein human collagen IV in vitro. Murine laminin is not hydrolyzed, neither isolated nor in a solubilized BM preparation. Nidogen is hydrolyzed at '350-Ser-|-Phe-351' bond in a solubilized BM preparation. Hydrolyzes plasma proteins involved in blood coagulation in vitro. Has alpha-fibrinogenase activity cleaving human fibrinogen alpha chain at '432-Lys-|-Leu-433' bond, but does not cleave beta or gamma chains. Does not cleave fibrin. Hydrolyzes only partially bovine prothrombin at '200-Ser-|-Gly-201' bond, factor X (FX) heavy chain, and very slowly, FX light chain and plasminogen in vitro, without activating any of them. Has no effect in plasma thrombin generation. Does not inhibit platelet aggregation induced by collagen in vitro. May have a delayed pathological action as an anticoagulant in envenomed patients after they received serotherapy as it is not recognized by the venom antiserum. In Vipera ammodytes ammodytes (Western sand viper), this protein is Zinc metalloproteinase-disintegrin-like protein F1.